A 79-amino-acid polypeptide reads, in one-letter code: Exodeoxyribonuclease 7 small subunit (79 aa).

It belongs to the XseB family. In terms of assembly, heterooligomer composed of large and small subunits.

The protein localises to the cytoplasm. It catalyses the reaction Exonucleolytic cleavage in either 5'- to 3'- or 3'- to 5'-direction to yield nucleoside 5'-phosphates.. Functionally, bidirectionally degrades single-stranded DNA into large acid-insoluble oligonucleotides, which are then degraded further into small acid-soluble oligonucleotides. The protein is Exodeoxyribonuclease 7 small subunit of Shouchella clausii (strain KSM-K16) (Alkalihalobacillus clausii).